Here is a 37-residue protein sequence, read N- to C-terminus: Esculentin-2Rb (37 aa).

C31 and C37 are disulfide-bonded.

As to expression, expressed by the skin glands.

It localises to the secreted. Functionally, antimicrobial peptide. This Pelophylax ridibundus (Marsh frog) protein is Esculentin-2Rb.